Consider the following 450-residue polypeptide: Tubulin alpha chain (450 aa).

Q11 is a binding site for GTP. N6-acetyllysine is present on K40. Residues E71, G144, T145, T179, N206, and N228 each contribute to the GTP site. Residue E71 participates in Mg(2+) binding. E254 is an active-site residue.

It belongs to the tubulin family. As to quaternary structure, dimer of alpha and beta chains. A typical microtubule is a hollow water-filled tube with an outer diameter of 25 nm and an inner diameter of 15 nM. Alpha-beta heterodimers associate head-to-tail to form protofilaments running lengthwise along the microtubule wall with the beta-tubulin subunit facing the microtubule plus end conferring a structural polarity. Microtubules usually have 13 protofilaments but different protofilament numbers can be found in some organisms and specialized cells. The cofactor is Mg(2+). Post-translationally, undergoes a tyrosination/detyrosination cycle, the cyclic removal and re-addition of a C-terminal tyrosine residue by the enzymes tubulin tyrosine carboxypeptidase (TTCP) and tubulin tyrosine ligase (TTL), respectively. In terms of processing, acetylation of alpha chains at Lys-40 stabilizes microtubules and affects affinity and processivity of microtubule motors. This modification has a role in multiple cellular functions, ranging from cell motility, cell cycle progression or cell differentiation to intracellular trafficking and signaling.

Its subcellular location is the cytoplasm. It is found in the cytoskeleton. The enzyme catalyses GTP + H2O = GDP + phosphate + H(+). In terms of biological role, tubulin is the major constituent of microtubules, a cylinder consisting of laterally associated linear protofilaments composed of alpha- and beta-tubulin heterodimers. Microtubules grow by the addition of GTP-tubulin dimers to the microtubule end, where a stabilizing cap forms. Below the cap, tubulin dimers are in GDP-bound state, owing to GTPase activity of alpha-tubulin. The protein is Tubulin alpha chain (TUBA) of Prunus dulcis (Almond).